Here is a 342-residue protein sequence, read N- to C-terminus: Heat-inducible transcription repressor HrcA (342 aa).

The protein belongs to the HrcA family.

Its function is as follows. Negative regulator of class I heat shock genes (grpE-dnaK-dnaJ and groELS operons). Prevents heat-shock induction of these operons. The chain is Heat-inducible transcription repressor HrcA from Leptospira borgpetersenii serovar Hardjo-bovis (strain JB197).